The sequence spans 303 residues: Probable 5-dehydro-4-deoxyglucarate dehydratase (303 aa).

It belongs to the DapA family.

It catalyses the reaction 5-dehydro-4-deoxy-D-glucarate + H(+) = 2,5-dioxopentanoate + CO2 + H2O. It participates in carbohydrate acid metabolism; D-glucarate degradation; 2,5-dioxopentanoate from D-glucarate: step 2/2. This is Probable 5-dehydro-4-deoxyglucarate dehydratase from Acidovorax ebreus (strain TPSY) (Diaphorobacter sp. (strain TPSY)).